The following is a 438-amino-acid chain: UDP-N-acetylmuramoylalanine--D-glutamate ligase (438 aa).

112–118 (GSNGKST) lines the ATP pocket.

It belongs to the MurCDEF family.

It is found in the cytoplasm. It catalyses the reaction UDP-N-acetyl-alpha-D-muramoyl-L-alanine + D-glutamate + ATP = UDP-N-acetyl-alpha-D-muramoyl-L-alanyl-D-glutamate + ADP + phosphate + H(+). It participates in cell wall biogenesis; peptidoglycan biosynthesis. Cell wall formation. Catalyzes the addition of glutamate to the nucleotide precursor UDP-N-acetylmuramoyl-L-alanine (UMA). In Pectobacterium atrosepticum (strain SCRI 1043 / ATCC BAA-672) (Erwinia carotovora subsp. atroseptica), this protein is UDP-N-acetylmuramoylalanine--D-glutamate ligase.